The chain runs to 685 residues: Bifunctional lycopene cyclase/phytoene synthase (685 aa).

A lycopene beta-cyclase region spans residues 15-255 (TLSYRHFHLL…LVSACFTFDR (241 aa)). The next 7 helical transmembrane spans lie at 21-41 (FHLL…RPFL), 48-68 (KLIL…NLIV), 92-114 (YFFF…RWAL), 129-149 (LATP…KAAV), 156-176 (YFGM…WGSV), 187-207 (GLAP…ASDV), and 231-251 (LPIE…SACF). Residues 262–685 (QSVAENAPPL…RAVSAVYFGV (424 aa)) form a phytoene synthase region.

The protein in the N-terminal section; belongs to the lycopene beta-cyclase family. This sequence in the C-terminal section; belongs to the phytoene/squalene synthase family.

Its subcellular location is the membrane. The catalysed reaction is all-trans-lycopene = gamma-carotene. The enzyme catalyses gamma-carotene = all-trans-beta-carotene. It catalyses the reaction 2 (2E,6E,10E)-geranylgeranyl diphosphate = 15-cis-phytoene + 2 diphosphate. Its pathway is carotenoid biosynthesis; beta-carotene biosynthesis. The protein operates within carotenoid biosynthesis; phytoene biosynthesis; all-trans-phytoene from geranylgeranyl diphosphate: step 1/1. Functionally, bifunctional enzyme that catalyzes the reactions from geranylgeranyl diphosphate to phytoene (phytoene synthase) and lycopene to beta-carotene via the intermediate gamma-carotene (lycopene cyclase). The polypeptide is Bifunctional lycopene cyclase/phytoene synthase (Sporisorium reilianum (strain SRZ2) (Maize head smut fungus)).